Reading from the N-terminus, the 445-residue chain is MREILHLQAGQCGNQIGAKFWEVISDEHGIDPSGTYHGDNELQLERINVYYNEATGGKYVPRAVLVDLEPGTMDSVRSGAFGQIFRPDNFVFGQSGAGNNWAKGHYTEGAELVDSVLDVVRKEAESCDCLQGFQLTHSLGGGTGSGMGTLLISKIREEYPDRIMNTFSVVPSPKVSDTVVEPYNATLSVHQLVENTDETYCIDNEALYDICFRTLKLTTPTYGDLNHLVSATMSGVTTCLRFPGQLNADLRKLAVNMVPFPRLHFFMPGFAPLTSRGSQQYRALTVPELTQQMFDAKNMMAACDPRHGRYLTVAAIFRGRMSMKEVDEQMLNVQNKNSSYFVEWIPNNVKTAVCDIPPRGLKMSSTFIGNSTAIQELFKRMSEQFTAMFRRKAFLHWYTGEGMDEMEFTEAESNMNDLVSEYQQYQDATAEEEGEGEEEGDEEVA.

The MREI motif motif lies at 1-4 (MREI). Positions 11, 69, 138, 142, 143, 144, 204, and 226 each coordinate GTP. Glu69 contacts Mg(2+). Residues 421-445 (EYQQYQDATAEEEGEGEEEGDEEVA) are disordered. The segment covering 429 to 445 (TAEEEGEGEEEGDEEVA) has biased composition (acidic residues). 5-glutamyl polyglutamate is present on Glu438.

It belongs to the tubulin family. Dimer of alpha and beta chains. A typical microtubule is a hollow water-filled tube with an outer diameter of 25 nm and an inner diameter of 15 nM. Alpha-beta heterodimers associate head-to-tail to form protofilaments running lengthwise along the microtubule wall with the beta-tubulin subunit facing the microtubule plus end conferring a structural polarity. Microtubules usually have 13 protofilaments but different protofilament numbers can be found in some organisms and specialized cells. Requires Mg(2+) as cofactor. Some glutamate residues at the C-terminus are polyglycylated, resulting in polyglycine chains on the gamma-carboxyl group. Glycylation is mainly limited to tubulin incorporated into axonemes (cilia and flagella) whereas glutamylation is prevalent in neuronal cells, centrioles, axonemes, and the mitotic spindle. Both modifications can coexist on the same protein on adjacent residues, and lowering polyglycylation levels increases polyglutamylation, and reciprocally. The precise function of polyglycylation is still unclear. In terms of processing, some glutamate residues at the C-terminus are polyglutamylated, resulting in polyglutamate chains on the gamma-carboxyl group. Polyglutamylation plays a key role in microtubule severing by spastin (SPAST). SPAST preferentially recognizes and acts on microtubules decorated with short polyglutamate tails: severing activity by SPAST increases as the number of glutamates per tubulin rises from one to eight, but decreases beyond this glutamylation threshold. As to expression, brain.

It is found in the cytoplasm. The protein localises to the cytoskeleton. Its function is as follows. Tubulin is the major constituent of microtubules, a cylinder consisting of laterally associated linear protofilaments composed of alpha- and beta-tubulin heterodimers. Microtubules grow by the addition of GTP-tubulin dimers to the microtubule end, where a stabilizing cap forms. Below the cap, tubulin dimers are in GDP-bound state, owing to GTPase activity of alpha-tubulin. This Pseudopleuronectes americanus (Winter flounder) protein is Tubulin beta chain.